The following is a 154-amino-acid chain: MVLKVKMGDIGVGKSPDSIETLLGSCVAIILYDRGKKIGGLAHIMLPKSRESDSKSPGKYADTAVPELLERLVKLGARRDKLVAKIAGGAAMFKANTNSIDVGKKNIDASKDELKKVGLRVSSEDTGGESGRTVVLSLKDGNVTIRKGNEVKNI.

This sequence belongs to the CheD family.

It carries out the reaction L-glutaminyl-[protein] + H2O = L-glutamyl-[protein] + NH4(+). Probably deamidates glutamine residues to glutamate on methyl-accepting chemotaxis receptors (MCPs), playing an important role in chemotaxis. This is Probable chemoreceptor glutamine deamidase CheD from Methanococcus vannielii (strain ATCC 35089 / DSM 1224 / JCM 13029 / OCM 148 / SB).